A 494-amino-acid polypeptide reads, in one-letter code: MGQHILAIDQGTTSSRSIIFSPKRSIDAIAQQEFSQKYPKDGWVEHDPEEIWESVVSTLKEVFNKCSVAPSDIAAIGITNQRETTLVWDKHSGKPVYNAIVWQDRRTAQYCRDFSEDEAFVSYITEATGLLLDPYFSATKIAWILDNVEGAREKAENGDLLFGTVDSYLIWRLTGGESHKTDATNASRTMLFDIHNQCWDEKLLSKFNIPASMLPEVMDCAADFGVIKEEIIGRAIPIQGVAGDQQAALVGQACFEKGMAKSTYGTGCFMILNTGDAPLQSKNRLLTTVGYRLNGKTTYALEGSIFMAGATVQWLRDGLKLIDDAAESEALAQRAREDNGVFLVPAFTGLGAPYWDPDARGAILGLTRDTGISEIVAAGLQSVCYQTKDLQKAMESDGARPTTIRVDGGMSRNDWVMGFLSDILGAEVERPEITETTALGAAFLAGLQAGVFNSIDDLTHCWKSDSVFTPRLTKQERDQAYDGWKSAVARIRCS.

Residue Thr12 participates in ADP binding. Positions 12, 13, and 14 each coordinate ATP. Thr12 contributes to the sn-glycerol 3-phosphate binding site. Arg16 is a binding site for ADP. 4 residues coordinate sn-glycerol 3-phosphate: Arg82, Glu83, Tyr135, and Asp244. Residues Arg82, Glu83, Tyr135, Asp244, and Gln245 each coordinate glycerol. Positions 266 and 309 each coordinate ADP. ATP-binding residues include Thr266, Gly309, Gln313, and Gly409. 2 residues coordinate ADP: Gly409 and Asn413.

Belongs to the FGGY kinase family.

The enzyme catalyses glycerol + ATP = sn-glycerol 3-phosphate + ADP + H(+). It functions in the pathway polyol metabolism; glycerol degradation via glycerol kinase pathway; sn-glycerol 3-phosphate from glycerol: step 1/1. With respect to regulation, inhibited by fructose 1,6-bisphosphate (FBP). Key enzyme in the regulation of glycerol uptake and metabolism. Catalyzes the phosphorylation of glycerol to yield sn-glycerol 3-phosphate. This Alteromonas mediterranea (strain DSM 17117 / CIP 110805 / LMG 28347 / Deep ecotype) protein is Glycerol kinase.